A 377-amino-acid chain; its full sequence is Gibberellin 20 oxidase 1 (377 aa).

Residues 222-322 (ENDSIMRLNY…RKSLAFFLCP (101 aa)) enclose the Fe2OG dioxygenase domain. Histidine 247, aspartate 249, and histidine 303 together coordinate Fe cation. Arginine 313 is a catalytic residue.

This sequence belongs to the iron/ascorbate-dependent oxidoreductase family. GA20OX subfamily. The cofactor is Fe(2+). L-ascorbate serves as cofactor. In terms of tissue distribution, highly expressed in stems and inflorescence tissues. Detected in seeds, roots, leaves and siliques.

The catalysed reaction is gibberellin A12 + 2 2-oxoglutarate + 3 O2 + H(+) = gibberellin A9 + 2 succinate + 3 CO2 + 2 H2O. It catalyses the reaction gibberellin A12 + 2-oxoglutarate + O2 = gibberellin A15 + succinate + CO2. It carries out the reaction gibberellin A15 + 2-oxoglutarate + O2 = gibberellin A24 + succinate + CO2 + H2O. The enzyme catalyses gibberellin A53 + 2-oxoglutarate + O2 = gibberellin A44 + succinate + CO2. The protein operates within plant hormone biosynthesis; gibberellin biosynthesis. Functionally, key oxidase enzyme in the biosynthesis of gibberellin that catalyzes the conversion of GA12 to GA9, via a three-step oxidation at C-20 of the GA skeleton. GA53 is less effectively oxidized than GA12 and is only oxidized one step to GA44. Involved in the promotion of the floral transition, fertility and silique elongation, but plays only a minor role in elongation of seedling organs. Acts redundantly with GA20OX2. The protein is Gibberellin 20 oxidase 1 (GA20OX1) of Arabidopsis thaliana (Mouse-ear cress).